The chain runs to 372 residues: L-lysine 4-hydroxylase (372 aa).

Fe cation-binding residues include His176, Glu178, and His312.

This sequence belongs to the clavaminate synthase family. It depends on Fe(2+) as a cofactor.

It carries out the reaction L-lysine + 2-oxoglutarate + O2 = (4R)-4-hydroxy-L-lysine + succinate + CO2. In terms of biological role, alpha-ketoglutarate-dependent dioxygenase that in vitro catalyzes the regio- and stereoselective hydroxylation of L-lysine, leading to (4R)-4-hydroxy-L-lysine. The protein is L-lysine 4-hydroxylase of Flavobacterium sp. (strain CF136).